Consider the following 297-residue polypeptide: Coatomer subunit epsilon-2 (297 aa).

This sequence belongs to the COPE family. Oligomeric complex that consists of at least the alpha, beta, beta', gamma, delta, epsilon and zeta subunits.

It localises to the cytoplasm. Its subcellular location is the golgi apparatus membrane. It is found in the cytoplasmic vesicle. The protein localises to the COPI-coated vesicle membrane. The coatomer is a cytosolic protein complex that binds to dilysine motifs and reversibly associates with Golgi non-clathrin-coated vesicles, which further mediate biosynthetic protein transport from the ER, via the Golgi up to the trans Golgi network. The coatomer complex is required for budding from Golgi membranes, and is essential for the retrograde Golgi-to-ER transport of dilysine-tagged proteins. The protein is Coatomer subunit epsilon-2 of Oryza sativa subsp. indica (Rice).